The chain runs to 1238 residues: DNA-directed RNA polymerase subunit beta (1238 aa).

A disordered region spans residues isoleucine 1186 to isoleucine 1238. Residues proline 1193–isoleucine 1238 show a composition bias toward acidic residues.

The protein belongs to the RNA polymerase beta chain family. The RNAP catalytic core consists of 2 alpha, 1 beta, 1 beta' and 1 omega subunit. When a sigma factor is associated with the core the holoenzyme is formed, which can initiate transcription.

It catalyses the reaction RNA(n) + a ribonucleoside 5'-triphosphate = RNA(n+1) + diphosphate. DNA-dependent RNA polymerase catalyzes the transcription of DNA into RNA using the four ribonucleoside triphosphates as substrates. This chain is DNA-directed RNA polymerase subunit beta, found in Thermoanaerobacter sp. (strain X514).